Reading from the N-terminus, the 219-residue chain is NAD(P)H-quinone oxidoreductase subunit I (219 aa).

2 consecutive 4Fe-4S ferredoxin-type domains span residues Gly55–Val84 and Arg95–Glu124. [4Fe-4S] cluster is bound by residues Cys64, Cys67, Cys70, Cys74, Cys104, Cys107, Cys110, and Cys114. The tract at residues Leu192 to Gly219 is disordered. Residues Ser208 to Gly219 are compositionally biased toward low complexity.

It belongs to the complex I 23 kDa subunit family. As to quaternary structure, NDH-1 is composed of at least 11 different subunits. [4Fe-4S] cluster is required as a cofactor.

The protein resides in the cellular thylakoid membrane. It carries out the reaction a plastoquinone + NADH + (n+1) H(+)(in) = a plastoquinol + NAD(+) + n H(+)(out). The catalysed reaction is a plastoquinone + NADPH + (n+1) H(+)(in) = a plastoquinol + NADP(+) + n H(+)(out). NDH-1 shuttles electrons from an unknown electron donor, via FMN and iron-sulfur (Fe-S) centers, to quinones in the respiratory and/or the photosynthetic chain. The immediate electron acceptor for the enzyme in this species is believed to be plastoquinone. Couples the redox reaction to proton translocation, and thus conserves the redox energy in a proton gradient. The chain is NAD(P)H-quinone oxidoreductase subunit I from Synechococcus sp. (strain CC9311).